A 327-amino-acid chain; its full sequence is Ribosomal RNA small subunit methyltransferase H (327 aa).

Residues 42 to 44, D61, L95, D109, and Q116 contribute to the S-adenosyl-L-methionine site; that span reads GGH.

Belongs to the methyltransferase superfamily. RsmH family.

It localises to the cytoplasm. The catalysed reaction is cytidine(1402) in 16S rRNA + S-adenosyl-L-methionine = N(4)-methylcytidine(1402) in 16S rRNA + S-adenosyl-L-homocysteine + H(+). Its function is as follows. Specifically methylates the N4 position of cytidine in position 1402 (C1402) of 16S rRNA. The polypeptide is Ribosomal RNA small subunit methyltransferase H (Desulfovibrio desulfuricans (strain ATCC 27774 / DSM 6949 / MB)).